A 515-amino-acid polypeptide reads, in one-letter code: Cytochrome P450 2D7 (515 aa).

At 1–2 the chain is on the extracellular side; it reads MG. A helical transmembrane segment spans residues 3–23; that stretch reads LEALVPLAMIVAIFLLLVDLM. The Cytoplasmic segment spans residues 24–301; that stretch reads HRHQRWAARY…DENLRIVVGN (278 aa). Residues 302 to 322 traverse the membrane as a helical segment; it reads LFLAGMVTTSTTLAWGLLLMI. Residues 323–515 are Extracellular-facing; it reads LHLDVQRGRR…SPYELCAVPR (193 aa). Asn-416 carries N-linked (GlcNAc...) asparagine glycosylation. A heme-binding site is contributed by Cys-461.

It belongs to the cytochrome P450 family. Requires heme as cofactor. As to expression, expressed in brain cortex (at protein level).

It localises to the membrane. It is found in the cytoplasm. The protein resides in the mitochondrion. It catalyses the reaction an organic molecule + reduced [NADPH--hemoprotein reductase] + O2 = an alcohol + oxidized [NADPH--hemoprotein reductase] + H2O + H(+). Functionally, may be responsible for the metabolism of many drugs and environmental chemicals that it oxidizes. It may be involved in the metabolism of codeine to morphine. However, another study could not confirm it. The protein is Cytochrome P450 2D7 of Homo sapiens (Human).